A 660-amino-acid polypeptide reads, in one-letter code: MSQSFELVSQYKPQGDQPNAIRQLVAGINEGKKHQTLLGATGTGKTFTMSNVIQQVNKPTLVIAHNKTLAGQLYSEFKEFFPNNAVEYFVSYYDYYQPEAYVPQSDTYIEKDASINDEIDKLRHSATSALFERNDVIIVASVSCIYGLGSPEEYKELVCSLRTGMEIERNDLLRQLVDIQYDRNDVNFTRGTFRVRGDVVEIFPASRDEQCIRVEFFGDEIDRITEVDALTGEIKGERNHVAIFPASHFVTREEKLKRATKSIEAELEERLKELHDRGKLLEAQRLEQRTRYDLEMIHEMGFCSGIENYSRHLTLRKAGETPYTLLDFFPDDFLIIIDESHVTIPQIRAMYNGDQARKGVLVDHGFRLPSALDNRPLKFEEFEHKVHQAVFVSATPGPYELEHTPEMVEQIIRPTGLLDPVIEVRPIEGQIDDLIGEINERVAKNERVLVTTLTKKMAEDLTDYLKEVGIKVRYLHSEVKTLERIEIIRQLRLGTFNVLVGINLLREGLDIPEVSLVAILDADKEGFLRAERSLIQTIGRAARNANGYVIMYADRMTKSMQIAIDETKRRRSIQEEYNRKHGITPKTIEKRIPDVIKATAMVAEDGEEYTSHAPKQKMSKKEREAVIERMEAEMKEAAKTLNFERAAELRDLILELKAEG.

The Helicase ATP-binding domain occupies 26–413 (AGINEGKKHQ…TPEMVEQIIR (388 aa)). Residue 39–46 (GATGTGKT) coordinates ATP. The short motif at 92 to 115 (YYDYYQPEAYVPQSDTYIEKDASI) is the Beta-hairpin element. The 163-residue stretch at 430–592 (QIDDLIGEIN…ITPKTIEKRI (163 aa)) folds into the Helicase C-terminal domain. In terms of domain architecture, UVR spans 624–659 (EAVIERMEAEMKEAAKTLNFERAAELRDLILELKAE).

Belongs to the UvrB family. As to quaternary structure, forms a heterotetramer with UvrA during the search for lesions. Interacts with UvrC in an incision complex.

It localises to the cytoplasm. In terms of biological role, the UvrABC repair system catalyzes the recognition and processing of DNA lesions. A damage recognition complex composed of 2 UvrA and 2 UvrB subunits scans DNA for abnormalities. Upon binding of the UvrA(2)B(2) complex to a putative damaged site, the DNA wraps around one UvrB monomer. DNA wrap is dependent on ATP binding by UvrB and probably causes local melting of the DNA helix, facilitating insertion of UvrB beta-hairpin between the DNA strands. Then UvrB probes one DNA strand for the presence of a lesion. If a lesion is found the UvrA subunits dissociate and the UvrB-DNA preincision complex is formed. This complex is subsequently bound by UvrC and the second UvrB is released. If no lesion is found, the DNA wraps around the other UvrB subunit that will check the other stand for damage. In Halalkalibacterium halodurans (strain ATCC BAA-125 / DSM 18197 / FERM 7344 / JCM 9153 / C-125) (Bacillus halodurans), this protein is UvrABC system protein B.